The primary structure comprises 197 residues: Holliday junction branch migration complex subunit RuvA (197 aa).

Positions 1 to 63 are domain I; that stretch reads MFEYLNGKLV…EDAHSLYGFV (63 aa). Residues 64-142 form a domain II region; that stretch reads NEAEKALFLR…ATGTVGISLL (79 aa). The tract at residues 142–146 is flexible linker; sequence LDAGP. The segment at 147-197 is domain III; that stretch reads AGNLALEEAIEALQALGYKATELKKIEKKLAQETGLTSEEYIKSALKLMMK.

The protein belongs to the RuvA family. In terms of assembly, homotetramer. Forms an RuvA(8)-RuvB(12)-Holliday junction (HJ) complex. HJ DNA is sandwiched between 2 RuvA tetramers; dsDNA enters through RuvA and exits via RuvB. An RuvB hexamer assembles on each DNA strand where it exits the tetramer. Each RuvB hexamer is contacted by two RuvA subunits (via domain III) on 2 adjacent RuvB subunits; this complex drives branch migration. In the full resolvosome a probable DNA-RuvA(4)-RuvB(12)-RuvC(2) complex forms which resolves the HJ.

Its subcellular location is the cytoplasm. The RuvA-RuvB-RuvC complex processes Holliday junction (HJ) DNA during genetic recombination and DNA repair, while the RuvA-RuvB complex plays an important role in the rescue of blocked DNA replication forks via replication fork reversal (RFR). RuvA specifically binds to HJ cruciform DNA, conferring on it an open structure. The RuvB hexamer acts as an ATP-dependent pump, pulling dsDNA into and through the RuvAB complex. HJ branch migration allows RuvC to scan DNA until it finds its consensus sequence, where it cleaves and resolves the cruciform DNA. The protein is Holliday junction branch migration complex subunit RuvA of Lactococcus lactis subsp. lactis (strain IL1403) (Streptococcus lactis).